We begin with the raw amino-acid sequence, 77 residues long: Large ribosomal subunit protein uL29 (77 aa).

Belongs to the universal ribosomal protein uL29 family.

This Mycobacterium avium (strain 104) protein is Large ribosomal subunit protein uL29.